We begin with the raw amino-acid sequence, 479 residues long: NADH-quinone oxidoreductase subunit N (479 aa).

14 helical membrane-spanning segments follow: residues methionine 3–isoleucine 23, isoleucine 40–isoleucine 60, isoleucine 77–alanine 97, histidine 102–alanine 122, phenylalanine 125–phenylalanine 145, tyrosine 159–glycine 179, methionine 200–isoleucine 220, alanine 234–leucine 254, phenylalanine 268–phenylalanine 288, phenylalanine 299–serine 319, isoleucine 327–isoleucine 347, serine 373–isoleucine 393, glutamate 409–valine 429, and leucine 452–glycine 472.

It belongs to the complex I subunit 2 family. NDH-1 is composed of 14 different subunits. Subunits NuoA, H, J, K, L, M, N constitute the membrane sector of the complex.

The protein localises to the cell inner membrane. It carries out the reaction a quinone + NADH + 5 H(+)(in) = a quinol + NAD(+) + 4 H(+)(out). In terms of biological role, NDH-1 shuttles electrons from NADH, via FMN and iron-sulfur (Fe-S) centers, to quinones in the respiratory chain. The immediate electron acceptor for the enzyme in this species is believed to be ubiquinone. Couples the redox reaction to proton translocation (for every two electrons transferred, four hydrogen ions are translocated across the cytoplasmic membrane), and thus conserves the redox energy in a proton gradient. The chain is NADH-quinone oxidoreductase subunit N from Orientia tsutsugamushi (strain Ikeda) (Rickettsia tsutsugamushi).